A 126-amino-acid chain; its full sequence is MADKLYQMEVQAEPQYVAEQSSVANDVYVFAYRVRITNTGSEPAQLISRHWIITDANQQVQEVRGMGVVGEQPHLDPGQVFEYSSAAHITTPYGSMKGAYQMMADDGRRFEASIPEMTLVAPRVLH.

The ApaG domain occupies 2–126 (ADKLYQMEVQ…MTLVAPRVLH (125 aa)).

The polypeptide is Protein ApaG (Chromobacterium violaceum (strain ATCC 12472 / DSM 30191 / JCM 1249 / CCUG 213 / NBRC 12614 / NCIMB 9131 / NCTC 9757 / MK)).